A 622-amino-acid chain; its full sequence is Chaperone protein HscA homolog (622 aa).

The protein belongs to the heat shock protein 70 family.

Its function is as follows. Chaperone involved in the maturation of iron-sulfur cluster-containing proteins. Has a low intrinsic ATPase activity which is markedly stimulated by HscB. The polypeptide is Chaperone protein HscA homolog (Burkholderia cenocepacia (strain HI2424)).